We begin with the raw amino-acid sequence, 459 residues long: MTAETETGIPGVPGTQAADQFNELPAHVWPRNAVRQEDGVVTVAGVPLPDLAEEYGTPLFVVDEDDFRARCRDMASAFGGPDRVHYASKAFLSKTVARWVDEEGLSLDIASENELGIALAADFPGERITAHGNNKDASFLRACVRNNLGHVVLDSAQELELLDYIAAGEGKVQPVLIRVKPGIEAHTHEFIATSHEDQKFGFSLASGAAFDAARAAVNAENLELVGLHCHVGSQVFDAQGFSLAAERVLELYSRIHDELGVTLAELDLGGGYGIAYTAAEEPLNVVEVAHDLLTAVGKTAAELGIEAPTVLVEPGRAIAGPSTVTVYEVGTIKDVDVDDETTRRYISVDGGMSDNIRPALYGAEYDARVVSRFTEGETTNTRVVGSHCESGDILINEATYPSDIHTGDLLALAATGAYCYAMSSRYNAFARPAVVSVRAGAAKLMLRRETLDDILSLEV.

N6-(pyridoxal phosphate)lysine is present on lysine 89. Pyridoxal 5'-phosphate contacts are provided by residues glycine 271 and 313-316 (EPGR). Positions 316, 357, and 361 each coordinate substrate. The active-site Proton donor is the cysteine 388. Residues glutamate 389 and tyrosine 418 each contribute to the substrate site. Tyrosine 418 contacts pyridoxal 5'-phosphate.

The protein belongs to the Orn/Lys/Arg decarboxylase class-II family. LysA subfamily. Homodimer. The cofactor is pyridoxal 5'-phosphate.

It catalyses the reaction meso-2,6-diaminopimelate + H(+) = L-lysine + CO2. It participates in amino-acid biosynthesis; L-lysine biosynthesis via DAP pathway; L-lysine from DL-2,6-diaminopimelate: step 1/1. In terms of biological role, specifically catalyzes the decarboxylation of meso-diaminopimelate (meso-DAP) to L-lysine. This Corynebacterium efficiens (strain DSM 44549 / YS-314 / AJ 12310 / JCM 11189 / NBRC 100395) protein is Diaminopimelate decarboxylase.